We begin with the raw amino-acid sequence, 256 residues long: Na(+)-translocating NADH-quinone reductase subunit E (256 aa).

The next 6 helical transmembrane spans lie at 1-21 (MWLG…AAFI), 50-70 (MSVA…HAFI), 83-103 (LASV…IAAF), 123-143 (GIFL…LFGI), 149-169 (FIPM…AIVI), and 189-209 (MGIS…LTGI). The span at 229–249 (ENTTNPLKESSSKHQPSISKA) shows a compositional bias: polar residues. The segment at 229–256 (ENTTNPLKESSSKHQPSISKARTQRRSL) is disordered.

It belongs to the NqrDE/RnfAE family. In terms of assembly, composed of six subunits; NqrA, NqrB, NqrC, NqrD, NqrE and NqrF.

Its subcellular location is the cell inner membrane. The enzyme catalyses a ubiquinone + n Na(+)(in) + NADH + H(+) = a ubiquinol + n Na(+)(out) + NAD(+). In terms of biological role, NQR complex catalyzes the reduction of ubiquinone-1 to ubiquinol by two successive reactions, coupled with the transport of Na(+) ions from the cytoplasm to the periplasm. NqrA to NqrE are probably involved in the second step, the conversion of ubisemiquinone to ubiquinol. This Chlamydia pneumoniae (Chlamydophila pneumoniae) protein is Na(+)-translocating NADH-quinone reductase subunit E.